The sequence spans 88 residues: DASH complex subunit HSK3 (88 aa).

Residues 1–15 (MSSRGSGANAASRQS) show a composition bias toward low complexity. Residues 1–24 (MSSRGSGANAASRQSMTASGGAVK) are disordered.

It belongs to the DASH complex HSK3 family. In terms of assembly, component of the DASH complex consisting of ASK1, DAD1, DAD2, DAD3, DAD4, DAM1, DUO1, HSK3, SPC19 and SPC34, with a stoichiometry of one copy of each subunit per complex. Multiple DASH complexes oligomerize to form a ring that encircles spindle microtubules and organizes the rod-like NDC80 complexes of the outer kinetochore. DASH complex oligomerization strengthens microtubule attachments. On cytoplasmic microtubules, DASH complexes appear to form patches instead of rings.

It localises to the nucleus. It is found in the cytoplasm. The protein localises to the cytoskeleton. Its subcellular location is the spindle. The protein resides in the chromosome. It localises to the centromere. It is found in the kinetochore. Component of the DASH complex that connects microtubules with kinetochores and couples microtubule depolymerisation to chromosome movement; it is involved in retrieving kinetochores to the spindle poles before their re-orientation on the spindle in early mitosis and allows microtubule depolymerization to pull chromosomes apart and resist detachment during anaphase. Kinetochores, consisting of a centromere-associated inner segment and a microtubule-contacting outer segment, play a crucial role in chromosome segregation by mediating the physical connection between centromeric DNA and microtubules. Kinetochores also serve as an input point for the spindle assembly checkpoint, which delays anaphase until all chromosomes have bioriented on the mitotic spindle. This Chaetomium thermophilum (strain DSM 1495 / CBS 144.50 / IMI 039719) (Thermochaetoides thermophila) protein is DASH complex subunit HSK3.